Consider the following 666-residue polypeptide: Magnesium-chelatase 67 kDa subunit (666 aa).

37-44 (GRRGTGKT) is a binding site for ATP. Positions 327–367 (LPDEEEQMQPPPPPPPPPPPPEPDKPDDPETPPDEAPKDEQ) are disordered. The segment covering 335 to 347 (QPPPPPPPPPPPP) has biased composition (pro residues). The VWFA domain maps to 475–661 (LIIFVVDASG…SLAETVKSGV (187 aa)).

Belongs to the Mg-chelatase subunits D/I family.

It carries out the reaction protoporphyrin IX + Mg(2+) + ATP + H2O = Mg-protoporphyrin IX + ADP + phosphate + 3 H(+). It participates in porphyrin-containing compound metabolism; bacteriochlorophyll biosynthesis. Functionally, involved in bacteriochlorophyll biosynthesis; introduces a magnesium ion into protoporphyrin IX to yield Mg-protoporphyrin IX. In Heliobacterium mobile (Heliobacillus mobilis), this protein is Magnesium-chelatase 67 kDa subunit (bchD).